A 161-amino-acid chain; its full sequence is Nucleotide-binding protein ABO_0048 (161 aa).

This sequence belongs to the YajQ family.

Its function is as follows. Nucleotide-binding protein. The protein is Nucleotide-binding protein ABO_0048 of Alcanivorax borkumensis (strain ATCC 700651 / DSM 11573 / NCIMB 13689 / SK2).